A 432-amino-acid polypeptide reads, in one-letter code: Gamma-glutamyl phosphate reductase (432 aa).

It belongs to the gamma-glutamyl phosphate reductase family.

It is found in the cytoplasm. It carries out the reaction L-glutamate 5-semialdehyde + phosphate + NADP(+) = L-glutamyl 5-phosphate + NADPH + H(+). The protein operates within amino-acid biosynthesis; L-proline biosynthesis; L-glutamate 5-semialdehyde from L-glutamate: step 2/2. Functionally, catalyzes the NADPH-dependent reduction of L-glutamate 5-phosphate into L-glutamate 5-semialdehyde and phosphate. The product spontaneously undergoes cyclization to form 1-pyrroline-5-carboxylate. The sequence is that of Gamma-glutamyl phosphate reductase from Psychrobacter sp. (strain PRwf-1).